Here is a 394-residue protein sequence, read N- to C-terminus: Chalcone synthase 4 (394 aa).

Residue Cys-165 is part of the active site.

Belongs to the thiolase-like superfamily. Chalcone/stilbene synthases family.

The catalysed reaction is (E)-4-coumaroyl-CoA + 3 malonyl-CoA + 3 H(+) = 2',4,4',6'-tetrahydroxychalcone + 3 CO2 + 4 CoA. Its pathway is secondary metabolite biosynthesis; flavonoid biosynthesis. Functionally, the primary product of this enzyme is 4,2',4',6'-tetrahydroxychalcone (also termed naringenin-chalcone or chalcone) which can under specific conditions spontaneously isomerize into naringenin. This chain is Chalcone synthase 4 (CHS4), found in Bromheadia finlaysoniana (Orchid).